A 212-amino-acid chain; its full sequence is Peptide methionine sulfoxide reductase MsrA (212 aa).

A compositionally biased stretch (polar residues) spans Met-1 to Asp-14. A disordered region spans residues Met-1–Thr-21. Cys-52 is an active-site residue.

Belongs to the MsrA Met sulfoxide reductase family.

It carries out the reaction L-methionyl-[protein] + [thioredoxin]-disulfide + H2O = L-methionyl-(S)-S-oxide-[protein] + [thioredoxin]-dithiol. The catalysed reaction is [thioredoxin]-disulfide + L-methionine + H2O = L-methionine (S)-S-oxide + [thioredoxin]-dithiol. Its function is as follows. Has an important function as a repair enzyme for proteins that have been inactivated by oxidation. Catalyzes the reversible oxidation-reduction of methionine sulfoxide in proteins to methionine. The chain is Peptide methionine sulfoxide reductase MsrA from Pectobacterium atrosepticum (strain SCRI 1043 / ATCC BAA-672) (Erwinia carotovora subsp. atroseptica).